A 212-amino-acid chain; its full sequence is dITP/XTP pyrophosphatase (212 aa).

7 to 12 lines the substrate pocket; that stretch reads SNNAKK. Glu39 and Asp68 together coordinate Mg(2+). Asp68 (proton acceptor) is an active-site residue. Substrate is bound by residues Ser69, 165-168, Lys188, and 193-194; these read FGYD and HR.

Belongs to the HAM1 NTPase family. As to quaternary structure, homodimer. Mg(2+) is required as a cofactor.

It carries out the reaction XTP + H2O = XMP + diphosphate + H(+). It catalyses the reaction dITP + H2O = dIMP + diphosphate + H(+). The enzyme catalyses ITP + H2O = IMP + diphosphate + H(+). Pyrophosphatase that catalyzes the hydrolysis of nucleoside triphosphates to their monophosphate derivatives, with a high preference for the non-canonical purine nucleotides XTP (xanthosine triphosphate), dITP (deoxyinosine triphosphate) and ITP. Seems to function as a house-cleaning enzyme that removes non-canonical purine nucleotides from the nucleotide pool, thus preventing their incorporation into DNA/RNA and avoiding chromosomal lesions. The sequence is that of dITP/XTP pyrophosphatase from Leptothrix cholodnii (strain ATCC 51168 / LMG 8142 / SP-6) (Leptothrix discophora (strain SP-6)).